The chain runs to 446 residues: Tubulin beta-2 chain (446 aa).

8 residues coordinate GTP: glutamine 11, glutamate 69, serine 138, glycine 142, threonine 143, glycine 144, asparagine 204, and asparagine 226. Position 69 (glutamate 69) interacts with Mg(2+).

The protein belongs to the tubulin family. In terms of assembly, dimer of alpha and beta chains. A typical microtubule is a hollow water-filled tube with an outer diameter of 25 nm and an inner diameter of 15 nM. Alpha-beta heterodimers associate head-to-tail to form protofilaments running lengthwise along the microtubule wall with the beta-tubulin subunit facing the microtubule plus end conferring a structural polarity. Microtubules usually have 13 protofilaments but different protofilament numbers can be found in some organisms and specialized cells. It depends on Mg(2+) as a cofactor.

It localises to the cytoplasm. It is found in the cytoskeleton. In terms of biological role, tubulin is the major constituent of microtubules, a cylinder consisting of laterally associated linear protofilaments composed of alpha- and beta-tubulin heterodimers. Microtubules grow by the addition of GTP-tubulin dimers to the microtubule end, where a stabilizing cap forms. Below the cap, tubulin dimers are in GDP-bound state, owing to GTPase activity of alpha-tubulin. In Hypocrea rufa (Trichoderma viride), this protein is Tubulin beta-2 chain (tub2).